The primary structure comprises 278 residues: Purine nucleoside phosphorylase YlmD (278 aa).

Residues H87, C132, and H149 each coordinate Zn(2+).

This sequence belongs to the purine nucleoside phosphorylase YfiH/LACC1 family. In terms of assembly, homodimer. It depends on Cu(2+) as a cofactor. The cofactor is Zn(2+).

It carries out the reaction adenosine + phosphate = alpha-D-ribose 1-phosphate + adenine. It catalyses the reaction S-methyl-5'-thioadenosine + phosphate = 5-(methylsulfanyl)-alpha-D-ribose 1-phosphate + adenine. The catalysed reaction is inosine + phosphate = alpha-D-ribose 1-phosphate + hypoxanthine. The enzyme catalyses adenosine + H2O + H(+) = inosine + NH4(+). Functionally, purine nucleoside enzyme that catalyzes the phosphorolysis of adenosine and inosine nucleosides, yielding D-ribose 1-phosphate and the respective free bases, adenine and hypoxanthine. Also catalyzes the phosphorolysis of S-methyl-5'-thioadenosine into adenine and S-methyl-5-thio-alpha-D-ribose 1-phosphate. Also has adenosine deaminase activity. In Bacillus subtilis (strain 168), this protein is Purine nucleoside phosphorylase YlmD (ylmD).